A 538-amino-acid chain; its full sequence is Protein phosphatase EYA2 (538 aa).

Residues 209 to 230 show a composition bias toward polar residues; the sequence is HNVPNQSSESLAGEYNTHNGPS. Positions 209–263 are disordered; sequence HNVPNQSSESLAGEYNTHNGPSTPAKEGDTDRPHRASDGKLRGRSKRSSDPSPAG. The segment covering 234 to 249 has biased composition (basic and acidic residues); that stretch reads KEGDTDRPHRASDGKL. Asp274 serves as the catalytic Nucleophile. Residues Asp274, Asp276, and Asp502 each contribute to the Mg(2+) site. Asp276 acts as the Proton donor in catalysis.

This sequence belongs to the HAD-like hydrolase superfamily. EYA family. Interacts with DACH2 and SIX1, and probably with SIX2, SIX4 and SIX5. Interacts with CAPN8. Interacts with GNAZ and GNAI2; this precludes interaction with SIX1. Mg(2+) is required as a cofactor. In terms of tissue distribution, highest expression in muscle with lower levels in kidney, placenta, pancreas, brain and heart.

It is found in the cytoplasm. It localises to the nucleus. The catalysed reaction is O-phospho-L-tyrosyl-[protein] + H2O = L-tyrosyl-[protein] + phosphate. In terms of biological role, functions both as protein phosphatase and as transcriptional coactivator for SIX1, and probably also for SIX2, SIX4 and SIX5. Tyrosine phosphatase that dephosphorylates 'Tyr-142' of histone H2AX (H2AXY142ph) and promotes efficient DNA repair via the recruitment of DNA repair complexes containing MDC1. 'Tyr-142' phosphorylation of histone H2AX plays a central role in DNA repair and acts as a mark that distinguishes between apoptotic and repair responses to genotoxic stress. Its function as histone phosphatase may contribute to its function in transcription regulation during organogenesis. Plays an important role in hypaxial muscle development together with SIX1 and DACH2; in this it is functionally redundant with EYA1. The polypeptide is Protein phosphatase EYA2 (EYA2) (Homo sapiens (Human)).